A 396-amino-acid polypeptide reads, in one-letter code: Flavohemoprotein (396 aa).

Residues 1-136 enclose the Globin domain; that stretch reads MLDNQTIATV…LADIFINREE (136 aa). Histidine 85 is a binding site for heme b. Residues tyrosine 95 and glutamate 135 each act as charge relay system in the active site. The reductase stretch occupies residues 147–396; sequence GGWRGLRPFR…YECFGPHKVI (250 aa). The FAD-binding FR-type domain occupies 150-255; it reads RGLRPFRINR…TAPRGDFFLD (106 aa). Residues tyrosine 188 and 204–207 contribute to the FAD site; that span reads RQYS. 268–273 lines the NADP(+) pocket; it reads GVGLTP. 389 to 392 contacts FAD; sequence CFGP.

The protein belongs to the globin family. Two-domain flavohemoproteins subfamily. In the C-terminal section; belongs to the flavoprotein pyridine nucleotide cytochrome reductase family. Heme b is required as a cofactor. The cofactor is FAD.

It catalyses the reaction 2 nitric oxide + NADPH + 2 O2 = 2 nitrate + NADP(+) + H(+). The enzyme catalyses 2 nitric oxide + NADH + 2 O2 = 2 nitrate + NAD(+) + H(+). Its function is as follows. Is involved in NO detoxification in an aerobic process, termed nitric oxide dioxygenase (NOD) reaction that utilizes O(2) and NAD(P)H to convert NO to nitrate, which protects the bacterium from various noxious nitrogen compounds. Therefore, plays a central role in the inducible response to nitrosative stress. The chain is Flavohemoprotein from Photorhabdus laumondii subsp. laumondii (strain DSM 15139 / CIP 105565 / TT01) (Photorhabdus luminescens subsp. laumondii).